The following is a 267-amino-acid chain: Stage 0 sporulation protein A (267 aa).

The 119-residue stretch at 5 to 123 (KVCVADDNRE…NLVGHIRQVS (119 aa)) folds into the Response regulatory domain. 3 residues coordinate Ca(2+): aspartate 10, aspartate 11, and aspartate 56. Aspartate 56 is subject to 4-aspartylphosphate. The tract at residues 126–150 (ASSVTHRAPSSQSSIIRSSQPEPKK) is disordered. Residues 135–145 (SSQSSIIRSSQ) show a composition bias toward low complexity. A DNA-binding region (H-T-H motif) is located at residues 199 to 218 (PDIAKKFNTTASRVERAIRH).

In terms of assembly, interacts with small protein YqaH, which is encoded in the skin prophage-like element. Ca(2+) is required as a cofactor. In terms of processing, phosphorylated by KinA and KinB.

It is found in the cytoplasm. May play the central regulatory role in sporulation. It may be an element of the effector pathway responsible for the activation of sporulation genes in response to nutritional stress. Spo0A may act in concert with Spo0H (a sigma factor) to control the expression of some genes that are critical to the sporulation process. Repressor of abrB, activator of the spoIIa operon. Binds the DNA sequence 5'-TGNCGAA-3' (0A box). This is Stage 0 sporulation protein A (spo0A) from Bacillus subtilis (strain 168).